The chain runs to 1276 residues: Probable outer membrane protein pmp6 (1276 aa).

The N-terminal stretch at 1–23 (MKYSLPWLLTSSALVFSLHPLMA) is a signal peptide. One can recognise an Autotransporter domain in the interval 981-1276 (DAPSHPGIWI…NANCGTRYSF (296 aa)).

This sequence belongs to the PMP outer membrane protein family.

The protein localises to the secreted. The protein resides in the cell wall. It localises to the cell outer membrane. The polypeptide is Probable outer membrane protein pmp6 (pmp6) (Chlamydia pneumoniae (Chlamydophila pneumoniae)).